We begin with the raw amino-acid sequence, 728 residues long: MSALPGFTLAALLLNVSLAEANGLVLKKDLELKGSTVAGKEAPLFLTADRIDSTAVGIIEAAGRVEARQAGRNFFADWLRYDTRENSVQARGKVRLEQPALLVTGDSLDIDLDTYSGQLAAPVYRFVGQPGRGDAERIDFIDENNFSLADATYTTCSVEDEDWYLKIADLDIDRGRDVGTAHHASLRFLGVPILYTPWMSFPLGDARKSGILAPTIGTTERSGLDIVVPYYLNLAPNYDATLYPRLLSKRGVQLGGEFRYLLEDARGVNRVEYLDDSEAARTRWSVALNNSYRLNANTQAGMLFDRVSDDDYFRDLSNLISITSLSHLNREVWVTTQHAHWNAELRAQSFQTLQDSTASTPIAEPYARLPHARLGAAQTFGRFEFTLESEATRFAHPTKTEGTRVLAYPTLRMPLVNDYGFLTPQIGWHSTYYALDESAADDNIVRNLPIFSLDSGVVFDRPMRFSGVDFEQTLEPRVYYVYAPYRDQDDIPIFDTGLLDFSYAQMFTPNQFIGGDRINDANQLTVAVTSRFVEAESGLERLQVTLGQRYYFTPQRVTLPGVDPRSDNTTDLLAAVSGQITRDWRIDTAWQFDTQNGTVIRQNLGASYRPGPGRAINFGYRFIDQTTEQVDVSAQWPLGRRWYGMFRYNYSFQDDKLVEGLAGLEYNGGCWALRTVFQRLATKEDQSTDALFFQLELNGMGRLGSNPLDVLKQSVPGYRPSNEILPTP.

Positions 1-21 (MSALPGFTLAALLLNVSLAEA) are cleaved as a signal peptide.

Belongs to the LptD family. Component of the lipopolysaccharide transport and assembly complex. Interacts with LptE and LptA.

It is found in the cell outer membrane. Its function is as follows. Together with LptE, is involved in the assembly of lipopolysaccharide (LPS) at the surface of the outer membrane. The chain is LPS-assembly protein LptD from Thiobacillus denitrificans (strain ATCC 25259 / T1).